The primary structure comprises 89 residues: Small ribosomal subunit protein eS25A (89 aa).

This sequence belongs to the eukaryotic ribosomal protein eS25 family. In terms of assembly, component of the small ribosomal subunit (SSU). Mature yeast ribosomes consist of a small (40S) and a large (60S) subunit. The 40S small subunit contains 1 molecule of ribosomal RNA (18S rRNA) and at least 33 different proteins. The large 60S subunit contains 3 rRNA molecules (25S, 5.8S and 5S rRNA) and at least 46 different proteins.

It is found in the cytoplasm. Functionally, component of the ribosome, a large ribonucleoprotein complex responsible for the synthesis of proteins in the cell. The small ribosomal subunit (SSU) binds messenger RNAs (mRNAs) and translates the encoded message by selecting cognate aminoacyl-transfer RNA (tRNA) molecules. The large subunit (LSU) contains the ribosomal catalytic site termed the peptidyl transferase center (PTC), which catalyzes the formation of peptide bonds, thereby polymerizing the amino acids delivered by tRNAs into a polypeptide chain. The nascent polypeptides leave the ribosome through a tunnel in the LSU and interact with protein factors that function in enzymatic processing, targeting, and the membrane insertion of nascent chains at the exit of the ribosomal tunnel. This chain is Small ribosomal subunit protein eS25A (rps2502), found in Schizosaccharomyces pombe (strain 972 / ATCC 24843) (Fission yeast).